The primary structure comprises 230 residues: 7-cyano-7-deazaguanine synthase (230 aa).

8–18 provides a ligand contact to ATP; the sequence is LSGGMDSAVVT. Positions 186, 196, 199, and 202 each coordinate Zn(2+).

Belongs to the QueC family. Zn(2+) is required as a cofactor.

The catalysed reaction is 7-carboxy-7-deazaguanine + NH4(+) + ATP = 7-cyano-7-deazaguanine + ADP + phosphate + H2O + H(+). It participates in purine metabolism; 7-cyano-7-deazaguanine biosynthesis. Functionally, catalyzes the ATP-dependent conversion of 7-carboxy-7-deazaguanine (CDG) to 7-cyano-7-deazaguanine (preQ(0)). The chain is 7-cyano-7-deazaguanine synthase from Xylella fastidiosa (strain M23).